The chain runs to 228 residues: ATP-dependent dethiobiotin synthetase BioD 1 (228 aa).

ATP is bound at residue 13–18; that stretch reads EVGKTV. Residue Thr17 coordinates Mg(2+). Residue Lys38 is part of the active site. Ser42 is a substrate binding site. Residues Asp55, 116–119, 176–177, and 205–207 contribute to the ATP site; these read EGAG, ND, and PWL. 2 residues coordinate Mg(2+): Asp55 and Glu116.

The protein belongs to the dethiobiotin synthetase family. In terms of assembly, homodimer. Requires Mg(2+) as cofactor.

Its subcellular location is the cytoplasm. It catalyses the reaction (7R,8S)-7,8-diammoniononanoate + CO2 + ATP = (4R,5S)-dethiobiotin + ADP + phosphate + 3 H(+). It functions in the pathway cofactor biosynthesis; biotin biosynthesis; biotin from 7,8-diaminononanoate: step 1/2. In terms of biological role, catalyzes a mechanistically unusual reaction, the ATP-dependent insertion of CO2 between the N7 and N8 nitrogen atoms of 7,8-diaminopelargonic acid (DAPA, also called 7,8-diammoniononanoate) to form a ureido ring. The protein is ATP-dependent dethiobiotin synthetase BioD 1 of Salmonella typhimurium (strain LT2 / SGSC1412 / ATCC 700720).